Consider the following 125-residue polypeptide: Phosphoribosyl-AMP cyclohydrolase (125 aa).

Aspartate 74 serves as a coordination point for Mg(2+). Cysteine 75 provides a ligand contact to Zn(2+). Mg(2+) contacts are provided by aspartate 76 and aspartate 78. Zn(2+) is bound by residues cysteine 92 and cysteine 99.

This sequence belongs to the PRA-CH family. As to quaternary structure, homodimer. Mg(2+) serves as cofactor. Requires Zn(2+) as cofactor.

Its subcellular location is the cytoplasm. The catalysed reaction is 1-(5-phospho-beta-D-ribosyl)-5'-AMP + H2O = 1-(5-phospho-beta-D-ribosyl)-5-[(5-phospho-beta-D-ribosylamino)methylideneamino]imidazole-4-carboxamide. It functions in the pathway amino-acid biosynthesis; L-histidine biosynthesis; L-histidine from 5-phospho-alpha-D-ribose 1-diphosphate: step 3/9. Functionally, catalyzes the hydrolysis of the adenine ring of phosphoribosyl-AMP. This chain is Phosphoribosyl-AMP cyclohydrolase, found in Pelobacter propionicus (strain DSM 2379 / NBRC 103807 / OttBd1).